An 85-amino-acid polypeptide reads, in one-letter code: MPKLEMMLLVLLILPLCYIDAVGPPPPWNMEDEIIEHWQKLHCHEISDLTPWILCSPEPLCGGKGCCAQEVCDCSGPACTCPPCL.

The signal sequence occupies residues 1–21 (MPKLEMMLLVLLILPLCYIDA). Residues 22 to 40 (VGPPPPWNMEDEIIEHWQK) constitute a propeptide that is removed on maturation. Disulfide bonds link cysteine 61-cysteine 74, cysteine 66-cysteine 84, cysteine 67-cysteine 79, and cysteine 72-cysteine 81.

It belongs to the conotoxin D superfamily. In terms of tissue distribution, expressed by the venom duct.

It localises to the secreted. Its function is as follows. Alpha-conotoxins act on postsynaptic membranes, they bind to the nicotinic acetylcholine receptors (nAChR) and thus inhibit them. This toxin weakly inhibits alpha-9-alpha-10/CHRNA9-CHRNA10 nAChRs (IC(50)=3 uM). The chain is Alpha-conotoxin Lt28.1 from Conus litteratus (Lettered cone).